The primary structure comprises 807 residues: DNA gyrase subunit B (807 aa).

The Toprim domain occupies 429 to 543; that stretch reads SELFIVEGDS…KGYLYIAQPP (115 aa). The Mg(2+) site is built by glutamate 435, aspartate 508, and aspartate 510.

It belongs to the type II topoisomerase GyrB family. In terms of assembly, heterotetramer, composed of two GyrA and two GyrB chains. In the heterotetramer, GyrA contains the active site tyrosine that forms a transient covalent intermediate with DNA, while GyrB binds cofactors and catalyzes ATP hydrolysis. Mg(2+) serves as cofactor. Requires Mn(2+) as cofactor. It depends on Ca(2+) as a cofactor.

Its subcellular location is the cytoplasm. It carries out the reaction ATP-dependent breakage, passage and rejoining of double-stranded DNA.. Its function is as follows. A type II topoisomerase that negatively supercoils closed circular double-stranded (ds) DNA in an ATP-dependent manner to modulate DNA topology and maintain chromosomes in an underwound state. Negative supercoiling favors strand separation, and DNA replication, transcription, recombination and repair, all of which involve strand separation. Also able to catalyze the interconversion of other topological isomers of dsDNA rings, including catenanes and knotted rings. Type II topoisomerases break and join 2 DNA strands simultaneously in an ATP-dependent manner. This chain is DNA gyrase subunit B, found in Rickettsia prowazekii (strain Madrid E).